The sequence spans 147 residues: Ribonuclease H (147 aa).

Residues 5 to 141 enclose the RNase H type-1 domain; it reads ARKQITLYSD…CDELARNEAE (137 aa). Residues D14, E52, D74, and D133 each coordinate Mg(2+).

This sequence belongs to the RNase H family. In terms of assembly, monomer. Mg(2+) serves as cofactor.

The protein localises to the cytoplasm. It carries out the reaction Endonucleolytic cleavage to 5'-phosphomonoester.. In terms of biological role, endonuclease that specifically degrades the RNA of RNA-DNA hybrids. The sequence is that of Ribonuclease H from Sulfurovum sp. (strain NBC37-1).